Consider the following 179-residue polypeptide: ATP synthase subunit delta (179 aa).

Belongs to the ATPase delta chain family. F-type ATPases have 2 components, F(1) - the catalytic core - and F(0) - the membrane proton channel. F(1) has five subunits: alpha(3), beta(3), gamma(1), delta(1), epsilon(1). F(0) has three main subunits: a(1), b(2) and c(10-14). The alpha and beta chains form an alternating ring which encloses part of the gamma chain. F(1) is attached to F(0) by a central stalk formed by the gamma and epsilon chains, while a peripheral stalk is formed by the delta and b chains.

The protein localises to the cell inner membrane. F(1)F(0) ATP synthase produces ATP from ADP in the presence of a proton or sodium gradient. F-type ATPases consist of two structural domains, F(1) containing the extramembraneous catalytic core and F(0) containing the membrane proton channel, linked together by a central stalk and a peripheral stalk. During catalysis, ATP synthesis in the catalytic domain of F(1) is coupled via a rotary mechanism of the central stalk subunits to proton translocation. Functionally, this protein is part of the stalk that links CF(0) to CF(1). It either transmits conformational changes from CF(0) to CF(1) or is implicated in proton conduction. The protein is ATP synthase subunit delta of Anaeromyxobacter sp. (strain Fw109-5).